A 364-amino-acid chain; its full sequence is UDP-N-acetylglucosamine--N-acetylmuramyl-(pentapeptide) pyrophosphoryl-undecaprenol N-acetylglucosamine transferase (364 aa).

UDP-N-acetyl-alpha-D-glucosamine is bound by residues threonine 12–glycine 14, asparagine 124, arginine 167, serine 195, isoleucine 249, alanine 268–glutamate 273, and glutamine 294.

This sequence belongs to the glycosyltransferase 28 family. MurG subfamily.

The protein resides in the cell inner membrane. The enzyme catalyses di-trans,octa-cis-undecaprenyl diphospho-N-acetyl-alpha-D-muramoyl-L-alanyl-D-glutamyl-meso-2,6-diaminopimeloyl-D-alanyl-D-alanine + UDP-N-acetyl-alpha-D-glucosamine = di-trans,octa-cis-undecaprenyl diphospho-[N-acetyl-alpha-D-glucosaminyl-(1-&gt;4)]-N-acetyl-alpha-D-muramoyl-L-alanyl-D-glutamyl-meso-2,6-diaminopimeloyl-D-alanyl-D-alanine + UDP + H(+). It functions in the pathway cell wall biogenesis; peptidoglycan biosynthesis. Its function is as follows. Cell wall formation. Catalyzes the transfer of a GlcNAc subunit on undecaprenyl-pyrophosphoryl-MurNAc-pentapeptide (lipid intermediate I) to form undecaprenyl-pyrophosphoryl-MurNAc-(pentapeptide)GlcNAc (lipid intermediate II). The protein is UDP-N-acetylglucosamine--N-acetylmuramyl-(pentapeptide) pyrophosphoryl-undecaprenol N-acetylglucosamine transferase of Alteromonas mediterranea (strain DSM 17117 / CIP 110805 / LMG 28347 / Deep ecotype).